Consider the following 239-residue polypeptide: Adapter protein MecA (239 aa).

Basic and acidic residues predominate over residues 118–128; sequence EQRTKEKEAQG. Residues 118-137 form a disordered region; it reads EQRTKEKEAQGSKRQKSSAR.

The protein belongs to the MecA family. Homodimer.

In terms of biological role, enables the recognition and targeting of unfolded and aggregated proteins to the ClpC protease or to other proteins involved in proteolysis. This chain is Adapter protein MecA, found in Staphylococcus aureus (strain Mu3 / ATCC 700698).